The following is a 741-amino-acid chain: NUT family member 2G (741 aa).

5 disordered regions span residues 172-200 (PGNA…PDDS), 293-375 (IQKS…PEEI), 391-424 (LGSH…SDPG), 496-624 (RAAP…LPGM), and 638-741 (RLSQ…HCSQ). Pro residues predominate over residues 304 to 321 (SLPPPAPPRLEPRGPPAP). The span at 402-412 (EGQREKGKVEQ) shows a compositional bias: basic and acidic residues. Residues 528–545 (QRVSVETSPPQTAAQDPQ) are compositionally biased toward polar residues. A compositionally biased stretch (low complexity) spans 639–650 (LSQSPVPSSGLL). Residues 731–741 (SRRKKKRHCSQ) are compositionally biased toward basic residues.

It belongs to the NUT family.

This is NUT family member 2G (NUTM2G) from Homo sapiens (Human).